A 621-amino-acid chain; its full sequence is 5-aminolevulinate synthase, mitochondrial (621 aa).

Positions 76–95 (DAKGSLAGRPVHHKAATEST) are disordered. Substrate is bound by residues Arg-122 and Ser-234. Residues Ser-286, His-314, and Thr-359 each coordinate pyridoxal 5'-phosphate. Lys-362 is a catalytic residue. Lys-362 carries the N6-(pyridoxal phosphate)lysine modification. Pyridoxal 5'-phosphate contacts are provided by Thr-391 and Thr-392. Substrate is bound at residue Thr-477.

Belongs to the class-II pyridoxal-phosphate-dependent aminotransferase family. In terms of assembly, homodimer. Pyridoxal 5'-phosphate serves as cofactor.

The protein localises to the mitochondrion matrix. It catalyses the reaction succinyl-CoA + glycine + H(+) = 5-aminolevulinate + CO2 + CoA. It functions in the pathway porphyrin-containing compound metabolism; protoporphyrin-IX biosynthesis; 5-aminolevulinate from glycine: step 1/1. Functionally, catalyzes the synthesis of 5-aminolevulinate (ALA) from succinyl-CoA and glycine, the first and rate-limiting step in heme biosynthesis. The protein is 5-aminolevulinate synthase, mitochondrial (hem1) of Agaricus bisporus (White button mushroom).